Here is a 309-residue protein sequence, read N- to C-terminus: Branched-chain-amino-acid aminotransferase (309 aa).

N6-(pyridoxal phosphate)lysine is present on Lys160.

Belongs to the class-IV pyridoxal-phosphate-dependent aminotransferase family. As to quaternary structure, homohexamer. Pyridoxal 5'-phosphate is required as a cofactor.

It catalyses the reaction L-leucine + 2-oxoglutarate = 4-methyl-2-oxopentanoate + L-glutamate. The catalysed reaction is L-isoleucine + 2-oxoglutarate = (S)-3-methyl-2-oxopentanoate + L-glutamate. It carries out the reaction L-valine + 2-oxoglutarate = 3-methyl-2-oxobutanoate + L-glutamate. It participates in amino-acid biosynthesis; L-isoleucine biosynthesis; L-isoleucine from 2-oxobutanoate: step 4/4. It functions in the pathway amino-acid biosynthesis; L-leucine biosynthesis; L-leucine from 3-methyl-2-oxobutanoate: step 4/4. The protein operates within amino-acid biosynthesis; L-valine biosynthesis; L-valine from pyruvate: step 4/4. In terms of biological role, acts on leucine, isoleucine and valine. This is Branched-chain-amino-acid aminotransferase (ilvE) from Salmonella typhi.